The chain runs to 383 residues: uncharacterized protein (383 aa).

It belongs to the peptidase M20 family.

This is an uncharacterized protein from Staphylococcus aureus (strain USA300).